A 1117-amino-acid polypeptide reads, in one-letter code: Protocadherin-11 X-linked (1117 aa).

Positions 1 to 23 (MDLLSGTHIFAVLLACIVFQSGA) are cleaved as a signal peptide. The Extracellular portion of the chain corresponds to 24-812 (QEKNYTIREE…ASSPSSDYVK (789 aa)). Residues N27 and N48 are each glycosylated (N-linked (GlcNAc...) asparagine). Cadherin domains lie at 27–139 (NYTI…APLF), 140–249 (PATV…RPVF), 250–355 (KENE…IPSI), 362–466 (NPIN…APVF), 467–570 (TQPF…SPVF), 571–673 (THNE…KPVF), and 677–795 (SSNY…TPVT). Residue N344 is glycosylated (N-linked (GlcNAc...) asparagine). An N-linked (GlcNAc...) asparagine glycan is attached at N553. Residues 813-833 (IVVAIVAGTITVILVIFITAV) form a helical membrane-spanning segment. Over 834–1117 (VRCQQSPHLK…DGNSDPESGK (284 aa)) the chain is Cytoplasmic. Positions 1029-1039 (TVEIWTHPQPQ) are enriched in polar residues. Residues 1029 to 1117 (TVEIWTHPQP…DGNSDPESGK (89 aa)) form a disordered region.

As to expression, expressed in adrenal gland, brain, heart, kidney, lung, prostate, skeletal muscle, testis and thymus.

The protein resides in the cell membrane. Functionally, potential calcium-dependent cell-adhesion protein. The protein is Protocadherin-11 X-linked (PCDH11X) of Sus scrofa (Pig).